The following is a 124-amino-acid chain: Large ribosomal subunit protein bL12 (124 aa).

It belongs to the bacterial ribosomal protein bL12 family. Homodimer. Part of the ribosomal stalk of the 50S ribosomal subunit. Forms a multimeric L10(L12)X complex, where L10 forms an elongated spine to which 2 to 4 L12 dimers bind in a sequential fashion. Binds GTP-bound translation factors.

Its function is as follows. Forms part of the ribosomal stalk which helps the ribosome interact with GTP-bound translation factors. Is thus essential for accurate translation. This Hamiltonella defensa subsp. Acyrthosiphon pisum (strain 5AT) protein is Large ribosomal subunit protein bL12.